An 85-amino-acid polypeptide reads, in one-letter code: Small ribosomal subunit protein bS20 (85 aa).

It belongs to the bacterial ribosomal protein bS20 family.

Functionally, binds directly to 16S ribosomal RNA. This chain is Small ribosomal subunit protein bS20, found in Ruminiclostridium cellulolyticum (strain ATCC 35319 / DSM 5812 / JCM 6584 / H10) (Clostridium cellulolyticum).